A 162-amino-acid chain; its full sequence is Large ribosomal subunit protein uL10 (162 aa).

Belongs to the universal ribosomal protein uL10 family. In terms of assembly, part of the ribosomal stalk of the 50S ribosomal subunit. The N-terminus interacts with L11 and the large rRNA to form the base of the stalk. The C-terminus forms an elongated spine to which L12 dimers bind in a sequential fashion forming a multimeric L10(L12)X complex.

Its function is as follows. Forms part of the ribosomal stalk, playing a central role in the interaction of the ribosome with GTP-bound translation factors. The polypeptide is Large ribosomal subunit protein uL10 (Borrelia recurrentis (strain A1)).